We begin with the raw amino-acid sequence, 351 residues long: Type II restriction enzyme NmeDI (351 aa).

It carries out the reaction Endonucleolytic cleavage of DNA to give specific double-stranded fragments with terminal 5'-phosphates.. A P subtype restriction enzyme that recognizes the double-stranded sequence 5'-N(12)RCCGGYN(12)-3' and cleaves on both sides of the recognition sequence. This chain is Type II restriction enzyme NmeDI (nmeDIRP), found in Neisseria meningitidis serogroup C.